The chain runs to 231 residues: Small ribosomal subunit protein uS3 (231 aa).

Residues 39 to 107 enclose the KH type-2 domain; it reads IRKYIVENLP…DVKLNIVEIR (69 aa).

It belongs to the universal ribosomal protein uS3 family. Part of the 30S ribosomal subunit. Forms a tight complex with proteins S10 and S14.

Its function is as follows. Binds the lower part of the 30S subunit head. Binds mRNA in the 70S ribosome, positioning it for translation. The polypeptide is Small ribosomal subunit protein uS3 (Novosphingobium aromaticivorans (strain ATCC 700278 / DSM 12444 / CCUG 56034 / CIP 105152 / NBRC 16084 / F199)).